The following is a 298-amino-acid chain: Probable endonuclease 4 (298 aa).

Zn(2+) is bound by residues H69, H111, E146, D180, H183, H215, D228, H230, and E260.

The protein belongs to the AP endonuclease 2 family. It depends on Zn(2+) as a cofactor.

The catalysed reaction is Endonucleolytic cleavage to 5'-phosphooligonucleotide end-products.. Endonuclease IV plays a role in DNA repair. It cleaves phosphodiester bonds at apurinic or apyrimidinic (AP) sites, generating a 3'-hydroxyl group and a 5'-terminal sugar phosphate. This chain is Probable endonuclease 4, found in Bacillus cereus (strain AH820).